Consider the following 249-residue polypeptide: Proteasome subunit alpha (249 aa).

A disordered region spans residues 229-249 (EAREAEEAAEAQSSEDGGATD).

The protein belongs to the peptidase T1A family. The 20S proteasome core is composed of 14 alpha and 14 beta subunits that assemble into four stacked heptameric rings, resulting in a barrel-shaped structure. The two inner rings, each composed of seven catalytic beta subunits, are sandwiched by two outer rings, each composed of seven alpha subunits. The catalytic chamber with the active sites is on the inside of the barrel. Has a gated structure, the ends of the cylinder being occluded by the N-termini of the alpha-subunits. Is capped by the proteasome-associated ATPase, ARC.

The protein resides in the cytoplasm. It participates in protein degradation; proteasomal Pup-dependent pathway. Its activity is regulated as follows. The formation of the proteasomal ATPase ARC-20S proteasome complex, likely via the docking of the C-termini of ARC into the intersubunit pockets in the alpha-rings, may trigger opening of the gate for substrate entry. Interconversion between the open-gate and close-gate conformations leads to a dynamic regulation of the 20S proteasome proteolysis activity. In terms of biological role, component of the proteasome core, a large protease complex with broad specificity involved in protein degradation. This chain is Proteasome subunit alpha, found in Thermobifida fusca (strain YX).